The primary structure comprises 270 residues: Phosphatidylglycerol--prolipoprotein diacylglyceryl transferase (270 aa).

A run of 7 helical transmembrane segments spans residues 10-30 (VAVA…LVGI), 56-76 (LIFW…VLFY), 92-112 (WKGG…AWWF), 120-140 (FFQL…AGRI), 175-195 (SQLY…NLYA), 202-222 (MAVS…VEFV), and 237-257 (VTMG…LIWL). Position 139 (Arg-139) interacts with a 1,2-diacyl-sn-glycero-3-phospho-(1'-sn-glycerol).

The protein belongs to the Lgt family.

It is found in the cell inner membrane. It carries out the reaction L-cysteinyl-[prolipoprotein] + a 1,2-diacyl-sn-glycero-3-phospho-(1'-sn-glycerol) = an S-1,2-diacyl-sn-glyceryl-L-cysteinyl-[prolipoprotein] + sn-glycerol 1-phosphate + H(+). The protein operates within protein modification; lipoprotein biosynthesis (diacylglyceryl transfer). Catalyzes the transfer of the diacylglyceryl group from phosphatidylglycerol to the sulfhydryl group of the N-terminal cysteine of a prolipoprotein, the first step in the formation of mature lipoproteins. The chain is Phosphatidylglycerol--prolipoprotein diacylglyceryl transferase from Pseudomonas syringae pv. tomato (strain ATCC BAA-871 / DC3000).